The sequence spans 266 residues: Tryptophan synthase alpha chain (266 aa).

Catalysis depends on proton acceptor residues Glu49 and Asp60.

This sequence belongs to the TrpA family. Tetramer of two alpha and two beta chains.

It catalyses the reaction (1S,2R)-1-C-(indol-3-yl)glycerol 3-phosphate + L-serine = D-glyceraldehyde 3-phosphate + L-tryptophan + H2O. It participates in amino-acid biosynthesis; L-tryptophan biosynthesis; L-tryptophan from chorismate: step 5/5. The alpha subunit is responsible for the aldol cleavage of indoleglycerol phosphate to indole and glyceraldehyde 3-phosphate. The sequence is that of Tryptophan synthase alpha chain from Trichormus variabilis (strain ATCC 29413 / PCC 7937) (Anabaena variabilis).